The sequence spans 129 residues: Glycine cleavage system H protein (129 aa).

One can recognise a Lipoyl-binding domain in the interval 24–106 (SYTVGISEHA…FGDGWFFRVM (83 aa)). Lysine 65 carries the N6-lipoyllysine modification.

Belongs to the GcvH family. The glycine cleavage system is composed of four proteins: P, T, L and H. The cofactor is (R)-lipoate.

In terms of biological role, the glycine cleavage system catalyzes the degradation of glycine. The H protein shuttles the methylamine group of glycine from the P protein to the T protein. This chain is Glycine cleavage system H protein, found in Shewanella halifaxensis (strain HAW-EB4).